The sequence spans 878 residues: Alanine--tRNA ligase (878 aa).

Zn(2+) contacts are provided by H567, H571, C669, and H673.

Belongs to the class-II aminoacyl-tRNA synthetase family. Requires Zn(2+) as cofactor.

It localises to the cytoplasm. The enzyme catalyses tRNA(Ala) + L-alanine + ATP = L-alanyl-tRNA(Ala) + AMP + diphosphate. Catalyzes the attachment of alanine to tRNA(Ala) in a two-step reaction: alanine is first activated by ATP to form Ala-AMP and then transferred to the acceptor end of tRNA(Ala). Also edits incorrectly charged Ser-tRNA(Ala) and Gly-tRNA(Ala) via its editing domain. The protein is Alanine--tRNA ligase of Rickettsia canadensis (strain McKiel).